A 537-amino-acid chain; its full sequence is DEAD-box ATP-dependent RNA helicase 5 (537 aa).

A disordered region spans residues 1–97 (MAGQKQELPV…EDLGEGESEQ (97 aa)). The stretch at 22-80 (TNKKKKKSKKNKHTEENHEVEEVPQEVTNGVEEELSNKEKKKKRKREEKESEKNKKKDV) forms a coiled coil. Positions 23-33 (NKKKKKSKKNK) are enriched in basic residues. The segment covering 68-87 (EEKESEKNKKKDVPEKKLEA) has biased composition (basic and acidic residues). The Q motif motif lies at 116–142 (KTFAESNLPENVLDCCKTFEKPSPIQS). The region spanning 145–324 (WPFLLDGRDL…QEFMDPNPIK (180 aa)) is the Helicase ATP-binding domain. Residue 158–165 (AKTGSGKT) participates in ATP binding. The DEAD box motif lies at 272–275 (DEAD). Residues 349 to 500 (ARDQRLIALL…VVPADLLKFG (152 aa)) form the Helicase C-terminal domain. Ser-533 is subject to Phosphoserine.

The protein belongs to the DEAD box helicase family. DDX5/DBP2 subfamily.

The protein resides in the nucleus. Its subcellular location is the nucleolus. It catalyses the reaction ATP + H2O = ADP + phosphate + H(+). In terms of biological role, ATP-dependent RNA helicase required for 60S ribosomal subunit synthesis. Involved in efficient pre-rRNA processing, predominantly at site A3, which is necessary for the normal formation of 25S and 5.8S rRNAs. This Arabidopsis thaliana (Mouse-ear cress) protein is DEAD-box ATP-dependent RNA helicase 5 (RH5).